The sequence spans 334 residues: Heat-inducible transcription repressor HrcA (334 aa).

Belongs to the HrcA family.

Its function is as follows. Negative regulator of class I heat shock genes (grpE-dnaK-dnaJ and groELS operons). Prevents heat-shock induction of these operons. This chain is Heat-inducible transcription repressor HrcA, found in Albidiferax ferrireducens (strain ATCC BAA-621 / DSM 15236 / T118) (Rhodoferax ferrireducens).